Consider the following 123-residue polypeptide: Methanesulfonate monooxygenase ferredoxin subunit (123 aa).

One can recognise a Rieske domain in the interval 4 to 99; it reads TYLCDAADVA…LKEEDGKLLA (96 aa). 4 residues coordinate [2Fe-2S] cluster: C43, H45, C63, and H66.

The protein belongs to the bacterial ring-hydroxylating dioxygenase ferredoxin component family. The MSA monooxygenase system consists of 4 proteins: the 2 subunits of the hydroxylase component (MsmA and MsmB), a ferredoxin (MsmC) and a ferredoxin reductase (MsmD). The ferredoxin component is dimeric. Requires [2Fe-2S] cluster as cofactor.

Its subcellular location is the cytoplasm. It catalyses the reaction methanesulfonate + NADH + O2 = sulfite + formaldehyde + NAD(+) + H2O. Its activity is regulated as follows. MSAMO is inhibited by metal chelators (such as bathophenanthroline, bathocuprione, neocuprione, alpha-alpha-dipyridil and sodium EDTA) and by sodium azide, sodium arsenate and potassium cyanide. Methanesulfonate monooxygenase (MSAMO) mediates the primary degradation of methanesulfonic acid (MSA) to produce formaldehyd and inorganic sulfite by initial hydroxylation of the carbon atom prior to spontaneous cleavage of the unstable hydroxymethanesulfonic acid. MSAMO has a restricted substrate range that includes only the short-chain aliphatic sulfonates (methane- to butanesulfonate) and excludes all larger molecules, such as arylsulfonates and aromatic sulfonates. All MSAMO components are required for enzyme activity. This chain is Methanesulfonate monooxygenase ferredoxin subunit, found in Methylosulfonomonas methylovora.